Reading from the N-terminus, the 790-residue chain is Cadherin-18 (790 aa).

A signal peptide spans 1–24; that stretch reads MKITSTSCICPVLVCLCFVQRCYG. Positions 25–53 are excised as a propeptide; sequence TTHHGSIRGTRNQTKHIEGETEVHHRPKR. The N-linked (GlcNAc...) asparagine glycan is linked to Asn36. Cadherin domains follow at residues 54–159, 160–268, 269–383, 384–486, and 487–608; these read GWVW…APKF, TDGP…PPRF, PQKH…PPLF, SMPS…DNPP, and ELAR…FLSS. Residues 54–608 are Extracellular-facing; sequence GWVWNQFFVL…TCHAEAFLSS (555 aa). The N-linked (GlcNAc...) asparagine glycan is linked to Asn255. N-linked (GlcNAc...) asparagine glycans are attached at residues Asn455 and Asn536. Residues 609–636 traverse the membrane as a helical segment; it reads AGLSTGALIAILLCVVILLAIVVLFITL. Residues 637–790 are Cytoplasmic-facing; the sequence is RRSKKEPLII…YGEIESERTT (154 aa). Ser786 carries the post-translational modification Phosphoserine.

It localises to the cell membrane. Cadherins are calcium-dependent cell adhesion proteins. They preferentially interact with themselves in a homophilic manner in connecting cells; cadherins may thus contribute to the sorting of heterogeneous cell types. This is Cadherin-18 (CDH18) from Bos taurus (Bovine).